The sequence spans 107 residues: Large ribosomal subunit protein uL24 (107 aa).

Belongs to the universal ribosomal protein uL24 family. In terms of assembly, part of the 50S ribosomal subunit.

Its function is as follows. One of two assembly initiator proteins, it binds directly to the 5'-end of the 23S rRNA, where it nucleates assembly of the 50S subunit. In terms of biological role, one of the proteins that surrounds the polypeptide exit tunnel on the outside of the subunit. The sequence is that of Large ribosomal subunit protein uL24 from Nitratidesulfovibrio vulgaris (strain DSM 19637 / Miyazaki F) (Desulfovibrio vulgaris).